Here is a 166-residue protein sequence, read N- to C-terminus: Deglycase PYRAB04690 (166 aa).

The PfpI endopeptidase domain occupies 1–166; it reads MRVLILSADQ…WMREFVKLLK (166 aa). His-101 is a catalytic residue.

Belongs to the peptidase C56 family. In terms of assembly, homohexamer formed by a dimer of trimers that assemble into a hollow ring structure.

Its subcellular location is the cytoplasm. It carries out the reaction N(omega)-(1-hydroxy-2-oxopropyl)-L-arginyl-[protein] + H2O = lactate + L-arginyl-[protein] + H(+). The enzyme catalyses N(6)-(1-hydroxy-2-oxopropyl)-L-lysyl-[protein] + H2O = lactate + L-lysyl-[protein] + H(+). The catalysed reaction is S-(1-hydroxy-2-oxopropyl)-L-cysteinyl-[protein] + H2O = lactate + L-cysteinyl-[protein] + H(+). It catalyses the reaction N(omega)-(1-hydroxy-2-oxoethyl)-L-arginyl-[protein] + H2O = L-arginyl-[protein] + glycolate + H(+). It carries out the reaction N(6)-(1-hydroxy-2-oxoethyl)-L-lysyl-[protein] + H2O = glycolate + L-lysyl-[protein] + H(+). The enzyme catalyses S-(1-hydroxy-2-oxoethyl)-L-cysteinyl-[protein] + H2O = glycolate + L-cysteinyl-[protein] + H(+). Deglycase that catalyzes the deglycation of the Maillard adducts formed between amino groups of proteins and reactive carbonyl groups of glyoxals. Thus, functions as a protein deglycase that repairs methylglyoxal- and glyoxal-glycated proteins, and releases repaired proteins and lactate or glycolate, respectively. Deglycates cysteine, arginine and lysine residues in proteins, and thus reactivates these proteins by reversing glycation by glyoxals. Acts on early glycation intermediates (hemithioacetals and aminocarbinols), preventing the formation of advanced glycation endproducts (AGE) that cause irreversible damage. Also displays proteolytic activity. The sequence is that of Deglycase PYRAB04690 from Pyrococcus abyssi (strain GE5 / Orsay).